Consider the following 200-residue polypeptide: MRRQYSMWASTVAVIACGSALMLLHPVGADAPKKRCLTKPNVSKKVDMVIHQCQEEIKSSLIEDALKIFTAEHGQWHDRRKRDEGGLDFSHPTIVSHEDKWIAGCLMQCVYRKNNAIDKNGWPTLDGLVSLYTDGVNEQGYFMATLRGVDRCLKGTSKKYQIKRNDAAENFEQCEVAFDVFDCISDMITDYCSGQMEDDH.

A signal peptide spans 1 to 29 (MRRQYSMWASTVAVIACGSALMLLHPVGA). Intrachain disulfides connect C105–C174 and C152–C183.

The protein belongs to the PBP/GOBP family.

It localises to the secreted. In terms of biological role, present in the aqueous fluid surrounding olfactory sensory dendrites and are thought to aid in the capture and transport of hydrophobic odorants into and through this fluid. The protein is General odorant-binding protein 70 (Obp70) of Anopheles gambiae (African malaria mosquito).